A 147-amino-acid polypeptide reads, in one-letter code: Cytochrome c-type biogenesis protein CcmE (147 aa).

Residues 1–9 (MKSLKKQRR) lie on the Cytoplasmic side of the membrane. A helical; Signal-anchor for type II membrane protein transmembrane segment spans residues 10-30 (IQIIALATVALVGSTALIGYA). Residues 31–147 (MRDGINYFRS…EQGVYREGDS (117 aa)) are Periplasmic-facing. Positions 123 and 127 each coordinate heme.

It belongs to the CcmE/CycJ family.

The protein localises to the cell inner membrane. In terms of biological role, heme chaperone required for the biogenesis of c-type cytochromes. Transiently binds heme delivered by CcmC and transfers the heme to apo-cytochromes in a process facilitated by CcmF and CcmH. The polypeptide is Cytochrome c-type biogenesis protein CcmE (Ruegeria sp. (strain TM1040) (Silicibacter sp.)).